A 198-amino-acid chain; its full sequence is Heme oxygenase PigA (198 aa).

His-26 is a binding site for heme b.

It belongs to the heme oxygenase family.

The catalysed reaction is heme b + 3 AH2 + 3 O2 + 2 H(+) = biliverdin IXbeta + CO + Fe(2+) + 3 A + 3 H2O. It carries out the reaction heme b + 3 AH2 + 3 O2 + 3 H(+) = biliverdin IXdelta + CO + Fe(2+) + 3 A + 3 H2O. In terms of biological role, involved in heme degradation. Catalyzes the degradation of heme to biliverdin, with the release of iron. Forms biliverdin delta (70%) and beta (30%). Under anaerobic conditions ferredoxin--NADP(+) reductase (fpr) can provide the necessary electrons; Bfd is not required. This Pseudomonas aeruginosa (strain ATCC 15692 / DSM 22644 / CIP 104116 / JCM 14847 / LMG 12228 / 1C / PRS 101 / PAO1) protein is Heme oxygenase PigA.